A 277-amino-acid chain; its full sequence is Phosphate import ATP-binding protein PstB 2 (277 aa).

Residues isoleucine 31 to isoleucine 272 enclose the ABC transporter domain. Glycine 63–serine 70 lines the ATP pocket.

It belongs to the ABC transporter superfamily. Phosphate importer (TC 3.A.1.7) family. In terms of assembly, the complex is composed of two ATP-binding proteins (PstB), two transmembrane proteins (PstC and PstA) and a solute-binding protein (PstS).

The protein resides in the cell inner membrane. The catalysed reaction is phosphate(out) + ATP + H2O = ADP + 2 phosphate(in) + H(+). Functionally, part of the ABC transporter complex PstSACB involved in phosphate import. Responsible for energy coupling to the transport system. The protein is Phosphate import ATP-binding protein PstB 2 of Pseudomonas savastanoi pv. phaseolicola (strain 1448A / Race 6) (Pseudomonas syringae pv. phaseolicola (strain 1448A / Race 6)).